Here is a 722-residue protein sequence, read N- to C-terminus: Capsid protein VP1 (722 aa).

Residues 14 to 59 form a phospholipase A2-like region; it reads YLGPGNSLDQGEPTNPSDAAAKEHDEAYAAYLRSGKNPYLYFSPAD. Disordered stretches follow at residues 90-115, 136-179, and 497-531; these read VLTDTPDHPSTSRPTKPTKRSKPPPH, LAPM…VGIS, and AGRGGAQTDENQAADGDPRYAFGRQHGQKTTTTGE. Residues 161-178 are compositionally biased toward gly residues; it reads SGNGSGGGGGGGSGGVGI.

This sequence belongs to the parvoviridae capsid protein family.

The protein localises to the virion. Functionally, capsid protein self-assembles to form an icosahedral capsid with a T=1 symmetry, about 22 nm in diameter, and consisting of 60 copies of two size variants of the capsid proteins, VP1 and VP2, which differ by the presence of an N-terminal extension in the minor protein VP1. The capsid encapsulates the genomic ssDNA. Capsid proteins are responsible for the attachment to host cell receptors. This attachment induces virion internalization predominantly through clathrin-dependent endocytosis. Binding to the host receptors also induces capsid rearrangements leading to surface exposure of VP1 N-terminus, specifically its phospholipase A2-like region and putative nuclear localization signal(s). VP1 N-terminus might serve as a lipolytic enzyme to breach the endosomal membrane during entry into host cell and might contribute to virus transport to the nucleus. In Neovison vison (American mink), this protein is Capsid protein VP1.